The primary structure comprises 947 residues: Bifunctional glutamine synthetase adenylyltransferase/adenylyl-removing enzyme (947 aa).

Residues 1-440 (MTPLSSPLSQ…VFNELIGDDE (440 aa)) form an adenylyl removase region. The segment at 450-947 (SEPWREVWQD…ASWRKWLVAV (498 aa)) is adenylyl transferase.

Belongs to the GlnE family. Mg(2+) is required as a cofactor.

It catalyses the reaction [glutamine synthetase]-O(4)-(5'-adenylyl)-L-tyrosine + phosphate = [glutamine synthetase]-L-tyrosine + ADP. It carries out the reaction [glutamine synthetase]-L-tyrosine + ATP = [glutamine synthetase]-O(4)-(5'-adenylyl)-L-tyrosine + diphosphate. In terms of biological role, involved in the regulation of glutamine synthetase GlnA, a key enzyme in the process to assimilate ammonia. When cellular nitrogen levels are high, the C-terminal adenylyl transferase (AT) inactivates GlnA by covalent transfer of an adenylyl group from ATP to specific tyrosine residue of GlnA, thus reducing its activity. Conversely, when nitrogen levels are low, the N-terminal adenylyl removase (AR) activates GlnA by removing the adenylyl group by phosphorolysis, increasing its activity. The regulatory region of GlnE binds the signal transduction protein PII (GlnB) which indicates the nitrogen status of the cell. This Salmonella newport (strain SL254) protein is Bifunctional glutamine synthetase adenylyltransferase/adenylyl-removing enzyme.